We begin with the raw amino-acid sequence, 132 residues long: Small ribosomal subunit protein uS8 (132 aa).

Belongs to the universal ribosomal protein uS8 family. As to quaternary structure, part of the 30S ribosomal subunit. Contacts proteins S5 and S12.

One of the primary rRNA binding proteins, it binds directly to 16S rRNA central domain where it helps coordinate assembly of the platform of the 30S subunit. This is Small ribosomal subunit protein uS8 from Heliobacterium modesticaldum (strain ATCC 51547 / Ice1).